A 246-amino-acid polypeptide reads, in one-letter code: Probable cytokinin riboside 5'-monophosphate phosphoribohydrolase LOGL5 (246 aa).

Positions 1–10 are enriched in basic and acidic residues; the sequence is MMMENSREQQ. The disordered stretch occupies residues 1 to 28; the sequence is MMMENSREQQPESSPANNNSKKKKKKKT. Residues Glu103, 121–122, 138–144, and Thr150 contribute to the substrate site; these read RK and GYGTLEE.

This sequence belongs to the LOG family. As to expression, expressed in roots and leaves.

The catalysed reaction is N(6)-(dimethylallyl)adenosine 5'-phosphate + H2O = N(6)-dimethylallyladenine + D-ribose 5-phosphate. It catalyses the reaction 9-ribosyl-trans-zeatin 5'-phosphate + H2O = trans-zeatin + D-ribose 5-phosphate. Functionally, cytokinin-activating enzyme working in the direct activation pathway. Phosphoribohydrolase that converts inactive cytokinin nucleotides to the biologically active free-base forms. This is Probable cytokinin riboside 5'-monophosphate phosphoribohydrolase LOGL5 (LOGL5) from Oryza sativa subsp. japonica (Rice).